A 101-amino-acid chain; its full sequence is MMPTLNEDQRKALFAEVPGWTLQSERDAIQKTFTFADFNAAFGFMTRVAIKAEQMNHHPEWFNVWNRVDITLSTHDANGLTHRDADLARFIEQAAKGTGAK.

Belongs to the pterin-4-alpha-carbinolamine dehydratase family.

The catalysed reaction is (4aS,6R)-4a-hydroxy-L-erythro-5,6,7,8-tetrahydrobiopterin = (6R)-L-erythro-6,7-dihydrobiopterin + H2O. The protein is Putative pterin-4-alpha-carbinolamine dehydratase of Ralstonia pickettii (strain 12J).